Consider the following 454-residue polypeptide: L-cysteine desulfhydrase (454 aa).

A disordered region spans residues 1 to 25 (MEAGERRNGDSMSHNHRAPKKPRLA). The span at 14-23 (HNHRAPKKPR) shows a compositional bias: basic residues. Position 257 is an N6-(pyridoxal phosphate)lysine (lysine 257).

This sequence belongs to the class-V pyridoxal-phosphate-dependent aminotransferase family. Pyridoxal 5'-phosphate is required as a cofactor. As to expression, highly expressed in stems and cauline leaves, and at lower levels in roots, rosette leaves and flowers.

The catalysed reaction is L-cysteine + H2O = hydrogen sulfide + pyruvate + NH4(+) + H(+). In terms of biological role, catalyzes the production of hydrogen sulfide (H2S) from cysteine. Is mainly responsible for the degradation of cysteine to generate H2S, a regulator of stomatal movement and closure. This chain is L-cysteine desulfhydrase (LCD), found in Arabidopsis thaliana (Mouse-ear cress).